A 309-amino-acid chain; its full sequence is Probable manganese-dependent inorganic pyrophosphatase (309 aa).

Positions 9, 13, 15, 75, 97, and 149 each coordinate Mn(2+).

The protein belongs to the PPase class C family. Requires Mn(2+) as cofactor.

It localises to the cytoplasm. The enzyme catalyses diphosphate + H2O = 2 phosphate + H(+). The polypeptide is Probable manganese-dependent inorganic pyrophosphatase (Bacillus cereus (strain ZK / E33L)).